A 406-amino-acid chain; its full sequence is Ubiquitin-associated domain-containing protein 1 (406 aa).

The 85-residue stretch at 14–98 (LRLHICSLDG…LLLVKKRAPP (85 aa)) folds into the Ubiquitin-like domain. Residues 95-122 (RAPPPTPKMAEVSADEKRKQDQKAPDKD) form a disordered region. Over residues 108-122 (ADEKRKQDQKAPDKD) the composition is skewed to basic and acidic residues. Residues 186 to 231 (EDDEDRVDEVALRQLTEMGFPESRAVKALRLNHMSVTQAMEWLIEH) form the UBA 1 domain. Low complexity predominate over residues 238–257 (DAPLPCENSSEAAGGLATGE). The disordered stretch occupies residues 238–272 (DAPLPCENSSEAAGGLATGEAETKPTLGAGAEDPK). The UBA 2 domain occupies 289-329 (RPDPRAVIALMEMGFDEKEVIDALRVNNNQQDAACEWLLGD). In terms of domain architecture, STI1 spans 354–393 (NPVVQLGLTNPKTLLAFEDMLENPLNSTQWMNDPETGPVM).

As to quaternary structure, component of the KPC complex.

It localises to the cytoplasm. It functions in the pathway protein modification; protein ubiquitination. Non-catalytic component of the KPC complex, a E3 ubiquitin-protein ligase complex that mediates polyubiquitination of target proteins, such as CDKN1B and NFKB1. Within the KPC complex, UBAC1 acts as an adapter that promotes the transfer of target proteins that have been polyubiquitinated by RNF123/KPC1 to the 26S proteasome. In Xenopus tropicalis (Western clawed frog), this protein is Ubiquitin-associated domain-containing protein 1 (ubac1).